We begin with the raw amino-acid sequence, 465 residues long: A-type ATP synthase subunit B (465 aa).

The protein belongs to the ATPase alpha/beta chains family. In terms of assembly, has multiple subunits with at least A(3), B(3), C, D, E, F, H, I and proteolipid K(x).

The protein resides in the cell membrane. Functionally, component of the A-type ATP synthase that produces ATP from ADP in the presence of a proton gradient across the membrane. The B chain is a regulatory subunit. The polypeptide is A-type ATP synthase subunit B (Thermococcus kodakarensis (strain ATCC BAA-918 / JCM 12380 / KOD1) (Pyrococcus kodakaraensis (strain KOD1))).